The primary structure comprises 320 residues: tRNA (guanosine(34)-2'-O)-methyltransferase (320 aa).

Residues glycine 53, tryptophan 55, aspartate 81, aspartate 97, and aspartate 122 each contribute to the S-adenosyl-L-methionine site. Lysine 162 (proton acceptor) is an active-site residue.

The protein belongs to the class I-like SAM-binding methyltransferase superfamily. RNA methyltransferase RlmE family. TRM7 subfamily. As to quaternary structure, interacts with CG33172/WDR6.

It is found in the cytoplasm. The enzyme catalyses cytidine(32)/guanosine(34) in tRNA + 2 S-adenosyl-L-methionine = 2'-O-methylcytidine(32)/2'-O-methylguanosine(34) in tRNA + 2 S-adenosyl-L-homocysteine + 2 H(+). Functionally, methylates the 2'-O-ribose of nucleotides at position 34 of the tRNA anticodon loop of substrate tRNAs. May require WDR6 for methylation of the nucleotide at position 34 of the anticodon loop of substrate tRNAs. Plays a role in neurogenesis. Requisite for RNA-mediated gene silencing. Modifies position 34 in tRNA(Leu(CAA)), tRNA(Leu(CAG)), tRNA(Phe(GAA)), and tRNA(Trp(CCA)). The sequence is that of tRNA (guanosine(34)-2'-O)-methyltransferase from Drosophila melanogaster (Fruit fly).